The sequence spans 303 residues: Putative S-adenosyl-L-methionine-dependent methyltransferase MSMEG_1479/MSMEI_1443 (303 aa).

S-adenosyl-L-methionine is bound by residues aspartate 130 and 159–160 (DL).

It belongs to the UPF0677 family.

Its function is as follows. Exhibits S-adenosyl-L-methionine-dependent methyltransferase activity. This Mycolicibacterium smegmatis (strain ATCC 700084 / mc(2)155) (Mycobacterium smegmatis) protein is Putative S-adenosyl-L-methionine-dependent methyltransferase MSMEG_1479/MSMEI_1443.